The primary structure comprises 375 residues: Heat shock protein 42 (375 aa).

Disordered stretches follow at residues 21–59 (TGQR…HPLY), 81–127 (SPEY…YYHC), 154–238 (PYEG…ETRM), and 347–375 (PKPK…TVEN). Residues 22 to 48 (GQRGQQGYPRQPQRPQRYHPHYGQVHV) are compositionally biased toward low complexity. Residues 49 to 58 (GGHHPRHHPL) show a composition bias toward basic residues. Acidic residues-rich tracts occupy residues 85–101 (GYDD…EDMV) and 158–168 (TEPEIEANTEQ). Over residues 169-197 (EGEKGEEKDKKDKSEAPKEEAGETNKEKP) the composition is skewed to basic and acidic residues. Phosphoserine occurs at positions 182, 213, 214, 215, and 223. A sHSP domain is found at 237 to 356 (RMDLPFSPEV…PKPKKRIAIE (120 aa)). Residues 357 to 367 (EIPDEELEFEE) show a composition bias toward acidic residues.

This sequence belongs to the small heat shock protein (HSP20) family. Forms oligomeric complexes. Interacts with itself.

The chain is Heat shock protein 42 (HSP42) from Saccharomyces cerevisiae (strain ATCC 204508 / S288c) (Baker's yeast).